The following is a 77-amino-acid chain: Teretoxin Tan15.2 (77 aa).

The signal sequence occupies residues 1 to 21 (MTRLTVVFLAILVLLPLATSN). A propeptide spanning residues 22–40 (SGADEAPASLSDLLHRTKR) is cleaved from the precursor.

In terms of processing, contains 4 disulfide bonds. Expressed by the venom duct.

It localises to the secreted. The polypeptide is Teretoxin Tan15.2 (Terebra anilis (Auger snail)).